A 141-amino-acid polypeptide reads, in one-letter code: Nucleoside diphosphate kinase (141 aa).

Lys-11, Phe-59, Arg-87, Thr-93, Arg-104, and Asn-114 together coordinate ATP. The Pros-phosphohistidine intermediate role is filled by His-117.

It belongs to the NDK family. As to quaternary structure, homotetramer. The cofactor is Mg(2+).

It is found in the cytoplasm. It catalyses the reaction a 2'-deoxyribonucleoside 5'-diphosphate + ATP = a 2'-deoxyribonucleoside 5'-triphosphate + ADP. The enzyme catalyses a ribonucleoside 5'-diphosphate + ATP = a ribonucleoside 5'-triphosphate + ADP. Major role in the synthesis of nucleoside triphosphates other than ATP. The ATP gamma phosphate is transferred to the NDP beta phosphate via a ping-pong mechanism, using a phosphorylated active-site intermediate. In Xanthomonas axonopodis pv. citri (strain 306), this protein is Nucleoside diphosphate kinase.